The primary structure comprises 444 residues: MTTRKTASSLQLLGKITGTKAGTKQKKMNFINGLIWLYMCVWMVHGKVTQKDELKWNKGYSLPNLLEVTDQQKELSQWTLGDKVKLEEGRFVLTPGKNTKGSLWLKPEYSIKDAMTIEWTFRSFGFRGSTKGGLAFWLKQGNEGDSTELFGGSSKKFNGLMILLRLDDKLGESVTAYLNDGTKDLDIESSPYFASCLFQYQDSMVPSTLRLTYNPLDNHLLKLQMDNRVCFQTRKVKFMGSSPFRIGTSAINDASKESFEILKMKLYDGVIEDSLIPNVNPMGQPRVVTKVINSQTGEESFREKMPFSDKEESITSNELFEKMNKLEGKIMANDIDPLLRKMNKIVENERELIQRLRPLLDLKKTAISDDSFQDFLSMNANLDRLIKEQEKIRQDAKLYGKQTKGHDEIFSKISVWLALLIFIMITLAYYMFRINQDIKKVKLL.

An N-terminal signal peptide occupies residues 1–46 (MTTRKTASSLQLLGKITGTKAGTKQKKMNFINGLIWLYMCVWMVHG). Residues 47-408 (KVTQKDELKW…YGKQTKGHDE (362 aa)) lie on the Lumenal side of the membrane. An L-type lectin-like domain is found at 52 to 269 (DELKWNKGYS…EILKMKLYDG (218 aa)). Residue Tyr-177 participates in K(+) binding. Cys-196 and Cys-230 are disulfide-bonded. Residues 409–429 (IFSKISVWLALLIFIMITLAY) form a helical membrane-spanning segment. The interval 429-432 (YYMF) is mediates the interactions with COPI and COPII coat complexes. Topologically, residues 430–444 (YMFRINQDIKKVKLL) are cytoplasmic. The Di-lysine motif motif lies at 440–444 (KVKLL).

This sequence belongs to the EMP46/EMP47 family. Interacts with EMP47 in the endoplasmic reticulum membrane in order to be transported to the Golgi apparatus. Interacts with the coatomer proteins COP1, SEC21 and SEC23.

It localises to the golgi apparatus membrane. It is found in the endoplasmic reticulum membrane. Functionally, involved in the secretion of glycoproteins and in nucleus architecture and gene silencing. This Saccharomyces cerevisiae (strain ATCC 204508 / S288c) (Baker's yeast) protein is Protein EMP46 (EMP46).